A 354-amino-acid polypeptide reads, in one-letter code: 3-isopropylmalate dehydrogenase (354 aa).

Substrate is bound by residues arginine 96, arginine 106, arginine 132, and aspartate 223. The Mg(2+) site is built by aspartate 223, aspartate 247, and aspartate 251. 283 to 295 (GSAPDIAGQGKAD) is an NAD(+) binding site.

It belongs to the isocitrate and isopropylmalate dehydrogenases family. LeuB type 2 subfamily. Homodimer. Mg(2+) serves as cofactor. Mn(2+) is required as a cofactor.

The protein localises to the cytoplasm. It catalyses the reaction (2R,3S)-3-isopropylmalate + NAD(+) = 4-methyl-2-oxopentanoate + CO2 + NADH. It participates in amino-acid biosynthesis; L-leucine biosynthesis; L-leucine from 3-methyl-2-oxobutanoate: step 3/4. Its function is as follows. Catalyzes the oxidation of 3-carboxy-2-hydroxy-4-methylpentanoate (3-isopropylmalate) to 3-carboxy-4-methyl-2-oxopentanoate. The product decarboxylates to 4-methyl-2 oxopentanoate. The protein is 3-isopropylmalate dehydrogenase of Thermobifida fusca (strain YX).